The following is a 157-amino-acid chain: UPF0225 protein PSPPH_1399 (157 aa).

Belongs to the UPF0225 family.

This chain is UPF0225 protein PSPPH_1399, found in Pseudomonas savastanoi pv. phaseolicola (strain 1448A / Race 6) (Pseudomonas syringae pv. phaseolicola (strain 1448A / Race 6)).